A 55-amino-acid chain; its full sequence is TGB2 protein (55 aa).

The helical transmembrane segment at 20–39 threads the bilayer; the sequence is NAAFAVVLLLSLLIYGSRCL.

The protein belongs to the carlavirus/potexvirus TGB2 protein family.

It localises to the host membrane. The three proteins TGB1, TGB2 and TGB3 are required for virus movement. The sequence is that of TGB2 protein from Potato virus X (strain Xc) (PVX).